A 154-amino-acid chain; its full sequence is uncharacterized protein (154 aa).

A run of 3 helical transmembrane segments spans residues 26–48, 97–119, and 132–150; these read VSGWLTIIGILVAIAGIIIGVVT, IAMFGIALAVYGGIVGLLLLIVF, and GLYTFLAIAIFCLMVYCAW.

The protein resides in the cell membrane. This is an uncharacterized protein from Archaeoglobus fulgidus (strain ATCC 49558 / DSM 4304 / JCM 9628 / NBRC 100126 / VC-16).